The following is a 46-amino-acid chain: Daisho2 (46 aa).

Residues 1-22 (MNCLKICGFFFALIAALATAEA) form the signal peptide.

In terms of tissue distribution, hemolymph (at protein level).

The protein localises to the secreted. Peptide which plays a role in the humoral immune response to a subset of filamentous fungi, including F.oxysporum and F.verticillioides. The sequence is that of Daisho2 from Drosophila melanogaster (Fruit fly).